A 375-amino-acid polypeptide reads, in one-letter code: Adiponectin receptor protein 1 (375 aa).

The segment at 1-60 is disordered; that stretch reads MSSHKGSVVAQGNGAPASNREADTVELAELGPLLEEKGKRVIANPPKAEEEQTCPVPQEE. Residues 1-136 are Cytoplasmic-facing; the sequence is MSSHKGSVVA…SIFRIHTETG (136 aa). A helical membrane pass occupies residues 137–157; it reads NIWTHLLGFVLFLFLGILTML. Residues 158-170 are Extracellular-facing; that stretch reads RPNMYFMAPLQEK. The helical transmembrane segment at 171 to 191 threads the bilayer; it reads VVFGMFFLGAVLCLSFSWLFH. His191 is a binding site for Zn(2+). At 192–203 the chain is on the cytoplasmic side; that stretch reads TVYCHSEKVSRT. Residues 204–224 form a helical membrane-spanning segment; sequence FSKLDYSGIALLIMGSFVPWL. Residues 225–234 are Extracellular-facing; that stretch reads YYSFYCSPQP. Residues 235–255 traverse the membrane as a helical segment; sequence RLIYLSIVCVLGISAIIVAQW. Residues 256-264 are Cytoplasmic-facing; sequence DRFATPKHR. The chain crosses the membrane as a helical span at residues 265-285; sequence QTRAGVFLGLGLSGVVPTMHF. The Extracellular segment spans residues 286–298; it reads TIAEGFVKATTVG. Residues 299–319 form a helical membrane-spanning segment; it reads QMGWFFLMAVMYITGAGLYAA. Over 320–337 the chain is Cytoplasmic; the sequence is RIPERFFPGKFDIWFQSH. Zn(2+) is bound by residues His337 and His341. A helical membrane pass occupies residues 338-358; sequence QIFHVLVVAAAFVHFYGVSNL. Topologically, residues 359–375 are extracellular; sequence QEFRYGLEGGCTDDTLL.

The protein belongs to the ADIPOR family. In terms of assembly, may form homooligomers and heterooligomers with ADIPOR2. Interacts with APPL2 (via BAR domain); hinders the accessibility of APPL1 to ADIPOR1; negatively regulates adiponectin signaling; ADIPOQ dissociates this interaction and facilitates the recruitment of APPL1 to ADIPOR1. Interacts with APPL1; ADIPOQ enhances this interaction; inhibites adiponectin-stimulated binding of APPL2 to ADIPOR1. As to expression, widely expressed. Highly expressed in heart and skeletal muscle. Expressed at intermediate level in brain, spleen, kidney, liver, placenta, lung and peripheral blood leukocytes. Weakly expressed in colon, thymus and small intestine.

It is found in the cell membrane. Its function is as follows. Receptor for ADIPOQ, an essential hormone secreted by adipocytes that regulates glucose and lipid metabolism. Required for normal glucose and fat homeostasis and for maintaining a normal body weight. ADIPOQ-binding activates a signaling cascade that leads to increased AMPK activity, and ultimately to increased fatty acid oxidation, increased glucose uptake and decreased gluconeogenesis. Has high affinity for globular adiponectin and low affinity for full-length adiponectin. The polypeptide is Adiponectin receptor protein 1 (Homo sapiens (Human)).